The chain runs to 1106 residues: Voltage-dependent calcium channel subunit alpha-2/delta-1 (1106 aa).

The N-terminal stretch at 1-26 is a signal peptide; the sequence is MAAGRPLAWTLTLWQAWLILIGPSSE. At 27–1076 the chain is on the extracellular side; the sequence is EPFPSAVTIK…VLEDYTDCGG (1050 aa). N-linked (GlcNAc...) asparagine glycosylation occurs at N94. S121 is subject to Phosphoserine. Residues N138 and N186 are each glycosylated (N-linked (GlcNAc...) asparagine). The 178-residue stretch at 255–432 folds into the VWFA domain; the sequence is DMLILVDVSG…INTQEYLDVL (178 aa). A divalent metal cation-binding residues include D261, S263, and S265. Positions 261 to 265 match the MIDAS-like motif motif; that stretch reads DVSGS. Residues N326 and N350 are each glycosylated (N-linked (GlcNAc...) asparagine). C406 and C1062 are oxidised to a cystine. Positions 448-539 constitute a Cache domain; that stretch reads WTNVYLDALE…QPKPIGVGIP (92 aa). N-linked (GlcNAc...) asparagine glycans are attached at residues N615, N784, and N891. The helical transmembrane segment at 1077-1097 threads the bilayer; sequence VSGLNPSLWSIIGIQFVLLWL. The Cytoplasmic portion of the chain corresponds to 1098–1106; the sequence is VSGSRHCLL.

The protein belongs to the calcium channel subunit alpha-2/delta family. As to quaternary structure, dimer formed of alpha-2-1 and delta-1 chains; disulfide-linked. Voltage-dependent calcium channels are multisubunit complexes, consisting of alpha-1 (CACNA1), alpha-2 (CACNA2D), beta (CACNB) and delta (CACNA2D) subunits in a 1:1:1:1 ratio. In terms of processing, proteolytically processed into subunits alpha-2-1 and delta-1 that are disulfide-linked. Skeletal muscle.

The protein localises to the membrane. It localises to the cell membrane. Functionally, the alpha-2/delta subunit of voltage-dependent calcium channels regulates calcium current density and activation/inactivation kinetics of the calcium channel. Plays an important role in excitation-contraction coupling. This Oryctolagus cuniculus (Rabbit) protein is Voltage-dependent calcium channel subunit alpha-2/delta-1 (CACNA2D1).